Consider the following 192-residue polypeptide: uncharacterized protein (192 aa).

In terms of domain architecture, Nudix hydrolase spans 29 to 160; the sequence is QRQAAVLVPV…PLDIHRRGNH (132 aa). A Nudix box motif is present at residues 67–89; that stretch reads GAVDDTDASLIAAALREAQEEVA. Mg(2+)-binding residues include Glu83 and Glu87.

The protein belongs to the Nudix hydrolase family. PCD1 subfamily. It depends on Mn(2+) as a cofactor. The cofactor is Mg(2+).

Probably mediates the hydrolysis of some nucleoside diphosphate derivatives. This is an uncharacterized protein from Cronobacter sakazakii (strain ATCC BAA-894) (Enterobacter sakazakii).